A 567-amino-acid chain; its full sequence is Diphtheria toxin (567 aa).

The first 32 residues, 1–32 (MLVRGYVVSRKLFASILIGALLGIGAPPSAHA), serve as a signal peptide directing secretion. H53 and Y97 together coordinate NAD(+). E180 is a catalytic residue. 2 disulfides stabilise this stretch: C218-C233 and C493-C503.

In terms of assembly, homodimer. Post-translationally, proteolytic activation by host furin cleaves the protein in two parts, Diphtheria toxin fragment A and Diphtheria toxin fragment B; which remain associated via a disulfide bond.

It carries out the reaction diphthamide-[translation elongation factor 2] + NAD(+) = N-(ADP-D-ribosyl)diphthamide-[translation elongation factor 2] + nicotinamide + H(+). With respect to regulation, partially inhibited by 1,8-naphthalimide (NAP). In terms of biological role, diphtheria toxin, produced by a phage infecting Corynebacterium diphtheriae, is a proenzyme that, after activation, catalyzes the covalent attachment of the ADP ribose moiety of NAD to eukaryotic elongation factor 2 (eEF-2). Fragment A is the catalytic portion responsible for enzymatic ADP-ribosylation of elongation factor 2, while fragment B is responsible for binding of toxin to cell receptors and entry of fragment A. The protein is Diphtheria toxin of Corynebacterium diphtheriae.